Reading from the N-terminus, the 443-residue chain is Mevalonate kinase (443 aa).

ATP-binding positions include lysine 12, serine 138, and 143–149 (GAGLGSS). 2 residues coordinate Mg(2+): serine 149 and glutamate 191. Aspartate 202 (proton acceptor) is an active-site residue.

Belongs to the GHMP kinase family. Mevalonate kinase subfamily. As to quaternary structure, homodimer. Mg(2+) is required as a cofactor.

It is found in the cytoplasm. Its subcellular location is the cytosol. The enzyme catalyses (R)-mevalonate + ATP = (R)-5-phosphomevalonate + ADP + H(+). It participates in isoprenoid biosynthesis; isopentenyl diphosphate biosynthesis via mevalonate pathway; isopentenyl diphosphate from (R)-mevalonate: step 1/3. Its activity is regulated as follows. Farnesyl pyrophosphate and geranyl pyrophosphate inhibit mevalonate kinase by binding competitively at the ATP-binding site. Functionally, mevalonate kinase; part of the second module of ergosterol biosynthesis pathway that includes the middle steps of the pathway. ERG12 converts mevalonate into 5-phosphomevalonate. The second module is carried out in the vacuole and involves the formation of farnesyl diphosphate, which is also an important intermediate in the biosynthesis of ubiquinone, dolichol, heme and prenylated proteins. Activity by the mevalonate kinase ERG12 first converts mevalonate into 5-phosphomevalonate. 5-phosphomevalonate is then further converted to 5-diphosphomevalonate by the phosphomevalonate kinase ERG8. The diphosphomevalonate decarboxylase MVD1/ERG19 then produces isopentenyl diphosphate. The isopentenyl-diphosphate delta-isomerase IDI1 then catalyzes the 1,3-allylic rearrangement of the homoallylic substrate isopentenyl (IPP) to its highly electrophilic allylic isomer, dimethylallyl diphosphate (DMAPP). Finally the farnesyl diphosphate synthase ERG20 catalyzes the sequential condensation of isopentenyl pyrophosphate with dimethylallyl pyrophosphate, and then with the resultant geranylpyrophosphate to the ultimate product farnesyl pyrophosphate. The sequence is that of Mevalonate kinase from Saccharomyces cerevisiae (strain ATCC 204508 / S288c) (Baker's yeast).